We begin with the raw amino-acid sequence, 578 residues long: 2-hydroxyacyl-CoA lyase 1 (578 aa).

Position 4 is a phosphoserine (Ser4). Glu60 contributes to the thiamine diphosphate binding site. 3 positions are modified to N6-succinyllysine: Lys351, Lys358, and Lys365. Positions 401–486 (TMDIGRTVLQ…LLVVNNNGIY (86 aa)) are thiamine pyrophosphate binding. Residues Asp455 and Asn482 each contribute to the Mg(2+) site. Residues 576–578 (SNM) carry the Microbody targeting signal motif.

Belongs to the TPP enzyme family. Homotetramer. It depends on Mg(2+) as a cofactor. Thiamine diphosphate is required as a cofactor. Widely expressed.

It localises to the peroxisome. It catalyses the reaction a 2-hydroxy-3-methyl fatty acyl-CoA = a 2-methyl-branched fatty aldehyde + formyl-CoA. It carries out the reaction an (R)-2-hydroxy-long-chain-fatty acyl-CoA = a long-chain fatty aldehyde + formyl-CoA. The catalysed reaction is 2-hydroxy-3-methylhexadecanoyl-CoA = 2-methylpentadecanal + formyl-CoA. The enzyme catalyses 2-hydroxyoctadecanoyl-CoA = heptadecanal + formyl-CoA. It catalyses the reaction 2-hydroxyphytanoyl-CoA = 2,6,10,14-tetramethylpentadecanal + formyl-CoA. The protein operates within lipid metabolism; fatty acid metabolism. Its function is as follows. Peroxisomal 2-OH acyl-CoA lyase involved in the cleavage (C1 removal) reaction in the fatty acid alpha-oxydation in a thiamine pyrophosphate (TPP)-dependent manner. Involved in the degradation of 3-methyl-branched fatty acids like phytanic acid and the shortening of 2-hydroxy long-chain fatty acids. Plays a significant role in the biosynthesis of heptadecanal in the liver. This Homo sapiens (Human) protein is 2-hydroxyacyl-CoA lyase 1.